The chain runs to 423 residues: Mannan endo-1,4-beta-mannosidase (423 aa).

The signal sequence occupies residues Met-1–Gly-27. In terms of domain architecture, GH26 spans Met-56–Arg-409. The substrate site is built by Glu-121, His-143, and Trp-162. The active-site Proton donor is Glu-212. Residues Trp-217 and Tyr-285 each coordinate substrate. Glu-320 functions as the Nucleophile in the catalytic mechanism. Substrate contacts are provided by residues Trp-360–Arg-361 and His-377.

It belongs to the glycosyl hydrolase 26 family. As to quaternary structure, homodimer.

The enzyme catalyses Random hydrolysis of (1-&gt;4)-beta-D-mannosidic linkages in mannans, galactomannans and glucomannans.. Its function is as follows. Catalyzes the endo hydrolysis of beta-1,4-linked mannan and galactomannan, but displays little activity towards other polysaccharides located in the plant cell wall. Preferentially hydrolyzes the larger oligosaccharides and has greater activity against non-substituted polysaccharides. It displays tight specificity for mannose at both the -2 and the -1 subsites. Appears to act in synergy with alpha-galactosidase (AgaA) to elicit hydrolysis of galactomannan. The protein is Mannan endo-1,4-beta-mannosidase of Cellvibrio japonicus (strain Ueda107) (Pseudomonas fluorescens subsp. cellulosa).